Reading from the N-terminus, the 153-residue chain is Type II secretion system core protein G (153 aa).

Positions 1–7 are cleaved as a propeptide — leader sequence; sequence MERRQRG. At Phe-8 the chain carries N-methylphenylalanine. The helical transmembrane segment at 8-28 threads the bilayer; it reads FTLLEIMVVIVILGVLASLVV. 2 disordered regions span residues 68–91 and 126–153; these read EQGL…PQDG and MPDT…NGNP. A compositionally biased stretch (low complexity) spans 134 to 143; sequence GNWNVGNGAH. Residues 144-153 show a composition bias toward gly residues; sequence NNGGNGNGNP.

Belongs to the GSP G family. In terms of assembly, type II secretion system is composed of four main components: the outer membrane complex, the inner membrane complex, the cytoplasmic secretion ATPase and the periplasm-spanning pseudopilus. Forms homomultimers. Post-translationally, cleaved by the prepilin peptidase. In terms of processing, methylated by prepilin peptidase at the amino group of the N-terminal phenylalanine once the leader sequence is cleaved.

The protein resides in the cell inner membrane. Core component of the type II secretion system required for the energy-dependent secretion of extracellular factors such as proteases and toxins from the periplasm. Pseudopilin (pilin-like) protein that polymerizes to form the pseudopilus. Further polymerization triggers pseudopilus growth. This Dickeya chrysanthemi (Pectobacterium chrysanthemi) protein is Type II secretion system core protein G (outG).